The primary structure comprises 632 residues: MSLKNDASSSHDGGSNRESVIDDHGRRKSTCGYCKSPARSSISHGLSAQTLTVYDYQALIDRGWRRSGTYLYKHEMDKTCCPPYTIRLKASDFVPTKEQQRVSRRLERFLDGKLDVQPREQRGASSSGDVSDTRRKTLGAAKSEENKKVEAVMDDLSKNIDQAVQLCIRSGEFPSNMQIPKASVKKVFCARRKKLAEGTEQILYTSNIAFPIAAAIKRIQTSEKEGINSAEGNRLSPETISEMLLSAMHKVGETPDVSIKVCKGHINFLSSAKDSFSDRDVVPNGNISRGANSLDGSETLHAKKDSENHQARKRKLEIHLKRSSFDPEEHELYKRYQLKVHNDKPGHVVESSYRRFLVDSPLIDVQPSGDEKVPPCGFGSFHQQYRIDGRLIAVGVVDILPKCLSSVYLFWDPDYAFLSLGKYSAIQEINWVIENQARCPSLQYYYLGYYIHSCSKMRYKAAYRPSELLCPLRFQWVPFEVARPMLDKKPYVILSDIAISHNQCSLLAGASETLVEPAASEHEDMEQGETNDNFMGCSDEDEDEDEDDDDDDDDDEEMYETESEDSHIESDPGSKDNDINNILIGLYGSQYRYKEMRQIITPVGRKQLEPMLQSYRKVVGAELSERMVYEIN.

A compositionally biased stretch (polar residues) spans 1-18 (MSLKNDASSSHDGGSNRE). 4 disordered regions span residues 1-27 (MSLKNDASSSHDGGSNRESVIDDHGRR), 113-144 (KLDVQPREQRGASSSGDVSDTRRKTLGAAKSE), 284-312 (NGNISRGANSLDGSETLHAKKDSENHQAR), and 517-580 (PAAS…NDIN). Positions 113-122 (KLDVQPREQR) are enriched in basic and acidic residues. Polar residues predominate over residues 285-296 (GNISRGANSLDG). Residues 298–310 (ETLHAKKDSENHQ) are compositionally biased toward basic and acidic residues. A compositionally biased stretch (acidic residues) spans 538–563 (SDEDEDEDEDDDDDDDDDEEMYETES). Positions 564–578 (EDSHIESDPGSKDND) are enriched in basic and acidic residues.

It belongs to the R-transferase family.

The enzyme catalyses an N-terminal L-alpha-aminoacyl-[protein] + L-arginyl-tRNA(Arg) = an N-terminal L-arginyl-L-aminoacyl-[protein] + tRNA(Arg) + H(+). In terms of biological role, involved in the post-translational conjugation of arginine to the N-terminal aspartate or glutamate of a protein. This arginylation is required for degradation of the protein via the ubiquitin pathway. Component of the N-end rule pathway with ATE2 and PRT6. The N-end rule pathway regulates seed after-ripening, seedling sugar sensitivity, seedling lipid breakdown, and abscisic acid (ABA) sensitivity of germination. The end-rule pathway regulates various aspects of leaf and shoot development. Involved in the oxygen-dependent N-arginylation of RAP2-12, an activator of hypoxic gene expression. This N-terminal modification leads to ubiquitination by PRT6 and subsequent degradation of RAP2-12 under aerobic conditions. Has an important role in the progression of leaf senescence. Involved in disease resistance. The end-rule pathway plays a role in regulating the timing and amplitude of the immune response following infection with the bacterial pathogen Pseudomonas syringae pv tomato. Regulates the biosynthesis of plant-defense metabolites such as glucosinolates, and the biosynthesis and response to the phytohormone jasmonate (JA), which plays a key role in plant immunity. The chain is Arginyl-tRNA--protein transferase 1 from Arabidopsis thaliana (Mouse-ear cress).